We begin with the raw amino-acid sequence, 317 residues long: Acetyl-coenzyme A carboxylase carboxyl transferase subunit alpha (317 aa).

One can recognise a CoA carboxyltransferase C-terminal domain in the interval 40–293 (LEVRVREAIL…GDVIANALAE (254 aa)).

It belongs to the AccA family. As to quaternary structure, acetyl-CoA carboxylase is a heterohexamer composed of biotin carboxyl carrier protein (AccB), biotin carboxylase (AccC) and two subunits each of ACCase subunit alpha (AccA) and ACCase subunit beta (AccD).

Its subcellular location is the cytoplasm. It catalyses the reaction N(6)-carboxybiotinyl-L-lysyl-[protein] + acetyl-CoA = N(6)-biotinyl-L-lysyl-[protein] + malonyl-CoA. It functions in the pathway lipid metabolism; malonyl-CoA biosynthesis; malonyl-CoA from acetyl-CoA: step 1/1. In terms of biological role, component of the acetyl coenzyme A carboxylase (ACC) complex. First, biotin carboxylase catalyzes the carboxylation of biotin on its carrier protein (BCCP) and then the CO(2) group is transferred by the carboxyltransferase to acetyl-CoA to form malonyl-CoA. This is Acetyl-coenzyme A carboxylase carboxyl transferase subunit alpha from Rhizobium etli (strain CIAT 652).